An 84-amino-acid polypeptide reads, in one-letter code: NADH-ubiquinone oxidoreductase chain 4L (84 aa).

The next 2 membrane-spanning stretches (helical) occupy residues 7-29 and 50-70; these read ILLL…EILL and IFSI…LSIL.

The protein belongs to the complex I subunit 4L family.

It localises to the mitochondrion membrane. The enzyme catalyses a ubiquinone + NADH + 5 H(+)(in) = a ubiquinol + NAD(+) + 4 H(+)(out). In terms of biological role, core subunit of the mitochondrial membrane respiratory chain NADH dehydrogenase (Complex I) that is believed to belong to the minimal assembly required for catalysis. Complex I functions in the transfer of electrons from NADH to the respiratory chain. The immediate electron acceptor for the enzyme is believed to be ubiquinone. This Candida parapsilosis (Yeast) protein is NADH-ubiquinone oxidoreductase chain 4L (ND4L).